A 406-amino-acid chain; its full sequence is Phosphopentomutase (406 aa).

6 residues coordinate Mn(2+): D10, D305, H310, D346, H347, and H358.

The protein belongs to the phosphopentomutase family. Mn(2+) serves as cofactor.

The protein localises to the cytoplasm. The catalysed reaction is 2-deoxy-alpha-D-ribose 1-phosphate = 2-deoxy-D-ribose 5-phosphate. It carries out the reaction alpha-D-ribose 1-phosphate = D-ribose 5-phosphate. It participates in carbohydrate degradation; 2-deoxy-D-ribose 1-phosphate degradation; D-glyceraldehyde 3-phosphate and acetaldehyde from 2-deoxy-alpha-D-ribose 1-phosphate: step 1/2. Functionally, isomerase that catalyzes the conversion of deoxy-ribose 1-phosphate (dRib-1-P) and ribose 1-phosphate (Rib-1-P) to deoxy-ribose 5-phosphate (dRib-5-P) and ribose 5-phosphate (Rib-5-P), respectively. This is Phosphopentomutase from Sinorhizobium medicae (strain WSM419) (Ensifer medicae).